The following is a 170-amino-acid chain: uncharacterized protein (170 aa).

This is an uncharacterized protein from Aquifex aeolicus (strain VF5).